We begin with the raw amino-acid sequence, 485 residues long: Heat stress transcription factor A-1d (485 aa).

Disordered stretches follow at residues 1-34 (MDVS…SSNA) and 126-149 (RRKP…QNSS). The DNA-binding element occupies 35–129 (PPPFLSKTYD…LLQSITRRKP (95 aa)). Positions 136 to 146 (GHQRSQHSNGQ) are enriched in low complexity. Residues 152-218 (ACVEVGKFGL…QLMSFLAKAV (67 aa)) form a hydrophobic repeat HR-A/B region. 2 disordered regions span residues 229-269 (QQQN…GQIV) and 436-461 (PVPD…DKTK). Residues 238 to 252 (NRRISDTSKKRRFKR) carry the Bipartite nuclear localization signal motif. The span at 441 to 455 (MDSTPVDNETEQEQN) shows a compositional bias: polar residues. The Nuclear export signal motif lies at 472–480 (LLSPETLDL).

The protein belongs to the HSF family. Class A subfamily. Homotrimer. Interacts with HSP90-2. Exhibits temperature-dependent phosphorylation.

It localises to the cytoplasm. The protein localises to the nucleus. In terms of biological role, transcriptional regulator that specifically binds DNA sequence 5'-AGAAnnTTCT-3' known as heat shock promoter elements (HSE). The polypeptide is Heat stress transcription factor A-1d (HSFA1D) (Arabidopsis thaliana (Mouse-ear cress)).